The sequence spans 331 residues: Pantothenate kinase (331 aa).

Residue 109–116 (GSVAVGKS) participates in ATP binding.

This sequence belongs to the prokaryotic pantothenate kinase family.

The protein localises to the cytoplasm. It carries out the reaction (R)-pantothenate + ATP = (R)-4'-phosphopantothenate + ADP + H(+). It functions in the pathway cofactor biosynthesis; coenzyme A biosynthesis; CoA from (R)-pantothenate: step 1/5. This is Pantothenate kinase from Rhizobium rhizogenes (strain K84 / ATCC BAA-868) (Agrobacterium radiobacter).